A 382-amino-acid polypeptide reads, in one-letter code: UDP-N-acetylglucosamine--N-acetylmuramyl-(pentapeptide) pyrophosphoryl-undecaprenol N-acetylglucosamine transferase (382 aa).

Residues 17 to 19 (TAG), Asn137, Arg179, Ser213, and Gln308 contribute to the UDP-N-acetyl-alpha-D-glucosamine site.

The protein belongs to the glycosyltransferase 28 family. MurG subfamily.

Its subcellular location is the cell membrane. It carries out the reaction di-trans,octa-cis-undecaprenyl diphospho-N-acetyl-alpha-D-muramoyl-L-alanyl-D-glutamyl-meso-2,6-diaminopimeloyl-D-alanyl-D-alanine + UDP-N-acetyl-alpha-D-glucosamine = di-trans,octa-cis-undecaprenyl diphospho-[N-acetyl-alpha-D-glucosaminyl-(1-&gt;4)]-N-acetyl-alpha-D-muramoyl-L-alanyl-D-glutamyl-meso-2,6-diaminopimeloyl-D-alanyl-D-alanine + UDP + H(+). The protein operates within cell wall biogenesis; peptidoglycan biosynthesis. Its function is as follows. Cell wall formation. Catalyzes the transfer of a GlcNAc subunit on undecaprenyl-pyrophosphoryl-MurNAc-pentapeptide (lipid intermediate I) to form undecaprenyl-pyrophosphoryl-MurNAc-(pentapeptide)GlcNAc (lipid intermediate II). This Rhodococcus jostii (strain RHA1) protein is UDP-N-acetylglucosamine--N-acetylmuramyl-(pentapeptide) pyrophosphoryl-undecaprenol N-acetylglucosamine transferase.